Here is a 135-residue protein sequence, read N- to C-terminus: Protein Wnt-7c (135 aa).

Intrachain disulfides connect Cys-3-Cys-17 and Cys-5-Cys-12. Ser-9 carries O-palmitoleoyl serine; by PORCN lipidation. N-linked (GlcNAc...) asparagine glycans are attached at residues Asn-62, Asn-85, and Asn-98. 3 disulfide bridges follow: Cys-81-Cys-112, Cys-97-Cys-107, and Cys-134-Cys-135.

Belongs to the Wnt family. Post-translationally, palmitoleoylation is required for efficient binding to frizzled receptors. Depalmitoleoylation leads to Wnt signaling pathway inhibition.

It is found in the secreted. The protein resides in the extracellular space. Its subcellular location is the extracellular matrix. Functionally, ligand for members of the frizzled family of seven transmembrane receptors. Probable developmental protein. May be a signaling molecule which affects the development of discrete regions of tissues. Is likely to signal over only few cell diameters. In Xenopus laevis (African clawed frog), this protein is Protein Wnt-7c (wnt7c).